The following is a 407-amino-acid chain: Na(+)-translocating NADH-quinone reductase subunit F (407 aa).

A helical membrane pass occupies residues 3–23 (IILGVVMFTLIVLVLSGLILA). Residues 32 to 126 (GDVVIEINNE…NMKIELPEEI (95 aa)) enclose the 2Fe-2S ferredoxin-type domain. Residues C69, C75, C78, and C110 each contribute to the [2Fe-2S] cluster site. The FAD-binding FR-type domain occupies 129 to 269 (VKKWECEVIS…SGPFGEFFAK (141 aa)).

The protein belongs to the NqrF family. Composed of six subunits; NqrA, NqrB, NqrC, NqrD, NqrE and NqrF. The cofactor is [2Fe-2S] cluster. It depends on FAD as a cofactor.

It is found in the cell inner membrane. It carries out the reaction a ubiquinone + n Na(+)(in) + NADH + H(+) = a ubiquinol + n Na(+)(out) + NAD(+). Its function is as follows. NQR complex catalyzes the reduction of ubiquinone-1 to ubiquinol by two successive reactions, coupled with the transport of Na(+) ions from the cytoplasm to the periplasm. The first step is catalyzed by NqrF, which accepts electrons from NADH and reduces ubiquinone-1 to ubisemiquinone by a one-electron transfer pathway. This chain is Na(+)-translocating NADH-quinone reductase subunit F, found in Klebsiella pneumoniae subsp. pneumoniae (strain ATCC 700721 / MGH 78578).